A 1706-amino-acid chain; its full sequence is Probable ATP-dependent RNA helicase DDX60-like (1706 aa).

The segment at 545–580 is disordered; sequence RPKEDSSGASGEILQNTKPHQITKKSKKKSFLKEDQ. Over residues 551–564 the composition is skewed to polar residues; the sequence is SGASGEILQNTKPH. Basic residues predominate over residues 565 to 574; the sequence is QITKKSKKKS. The Helicase ATP-binding domain maps to 752–919; the sequence is LDVVDKNESA…WLQSVKQYWK (168 aa). 765–772 provides a ligand contact to ATP; the sequence is APTSSGKT. The short motif at 869–872 is the DEAH box element; sequence DEVH. In terms of domain architecture, Helicase C-terminal spans 1205 to 1354; sequence DVKALHTEIT…QFPLSITLVL (150 aa).

Belongs to the helicase family.

The catalysed reaction is ATP + H2O = ADP + phosphate + H(+). The polypeptide is Probable ATP-dependent RNA helicase DDX60-like (Homo sapiens (Human)).